The primary structure comprises 213 residues: Ribosomal RNA small subunit methyltransferase G (213 aa).

S-adenosyl-L-methionine-binding positions include glycine 81, leucine 86, 132–133, and arginine 147; that span reads VE.

Belongs to the methyltransferase superfamily. RNA methyltransferase RsmG family.

The protein resides in the cytoplasm. It catalyses the reaction guanosine(527) in 16S rRNA + S-adenosyl-L-methionine = N(7)-methylguanosine(527) in 16S rRNA + S-adenosyl-L-homocysteine. Functionally, specifically methylates the N7 position of guanine in position 527 of 16S rRNA. In Mannheimia succiniciproducens (strain KCTC 0769BP / MBEL55E), this protein is Ribosomal RNA small subunit methyltransferase G.